Reading from the N-terminus, the 106-residue chain is Large ribosomal subunit protein eL42 (106 aa).

This sequence belongs to the eukaryotic ribosomal protein eL42 family.

The protein is Large ribosomal subunit protein eL42 (RPL44) of Eremothecium gossypii (strain ATCC 10895 / CBS 109.51 / FGSC 9923 / NRRL Y-1056) (Yeast).